A 296-amino-acid polypeptide reads, in one-letter code: Diaminopimelate epimerase (296 aa).

Residues N11 and N78 each coordinate substrate. Catalysis depends on C87, which acts as the Proton donor. Substrate is bound by residues 88–89 (GN), N167, N203, and 221–222 (ER). The active-site Proton acceptor is the C230. 231 to 232 (GT) contributes to the substrate binding site.

This sequence belongs to the diaminopimelate epimerase family. In terms of assembly, homodimer.

Its subcellular location is the cytoplasm. The catalysed reaction is (2S,6S)-2,6-diaminopimelate = meso-2,6-diaminopimelate. It functions in the pathway amino-acid biosynthesis; L-lysine biosynthesis via DAP pathway; DL-2,6-diaminopimelate from LL-2,6-diaminopimelate: step 1/1. Catalyzes the stereoinversion of LL-2,6-diaminopimelate (L,L-DAP) to meso-diaminopimelate (meso-DAP), a precursor of L-lysine and an essential component of the bacterial peptidoglycan. The protein is Diaminopimelate epimerase of Mycobacterium leprae (strain Br4923).